Here is a 146-residue protein sequence, read N- to C-terminus: Neutral phospholipase A2 B (146 aa).

An N-terminal signal peptide occupies residues Met-1 to Ser-21. A propeptide spanning residues Asn-22–Leu-27 is cleaved from the precursor. 7 disulfides stabilise this stretch: Cys-38/Cys-98, Cys-53/Cys-145, Cys-55/Cys-71, Cys-70/Cys-126, Cys-77/Cys-119, Cys-87/Cys-112, and Cys-105/Cys-117. 3 residues coordinate Ca(2+): Tyr-54, Gly-56, and Gly-58. Residue His-74 is part of the active site. Residue Asp-75 coordinates Ca(2+). Asp-120 is a catalytic residue.

It belongs to the phospholipase A2 family. Group I subfamily. D49 sub-subfamily. The cofactor is Ca(2+). As to expression, expressed by the venom gland.

Its subcellular location is the secreted. It catalyses the reaction a 1,2-diacyl-sn-glycero-3-phosphocholine + H2O = a 1-acyl-sn-glycero-3-phosphocholine + a fatty acid + H(+). Its function is as follows. PLA2 catalyzes the calcium-dependent hydrolysis of the 2-acyl groups in 3-sn-phosphoglycerides. The protein is Neutral phospholipase A2 B of Naja sputatrix (Malayan spitting cobra).